The primary structure comprises 517 residues: 2-isopropylmalate synthase (517 aa).

One can recognise a Pyruvate carboxyltransferase domain in the interval 7-269 (VIIFDTTLRD…ETGIDTTQIV (263 aa)). Positions 16, 204, 206, and 240 each coordinate Mn(2+). A regulatory domain region spans residues 395-517 (KFISQKISTE…KPKAQGSGTI (123 aa)).

This sequence belongs to the alpha-IPM synthase/homocitrate synthase family. LeuA type 1 subfamily. In terms of assembly, homodimer. Mn(2+) serves as cofactor.

The protein resides in the cytoplasm. The catalysed reaction is 3-methyl-2-oxobutanoate + acetyl-CoA + H2O = (2S)-2-isopropylmalate + CoA + H(+). It functions in the pathway amino-acid biosynthesis; L-leucine biosynthesis; L-leucine from 3-methyl-2-oxobutanoate: step 1/4. Functionally, catalyzes the condensation of the acetyl group of acetyl-CoA with 3-methyl-2-oxobutanoate (2-ketoisovalerate) to form 3-carboxy-3-hydroxy-4-methylpentanoate (2-isopropylmalate). This Neisseria meningitidis serogroup A / serotype 4A (strain DSM 15465 / Z2491) protein is 2-isopropylmalate synthase.